The primary structure comprises 149 residues: uncharacterized protein (149 aa).

Positions proline 16–aspartate 128 constitute a HotDog ACOT-type domain.

It belongs to the acyl coenzyme A hydrolase family.

This is an uncharacterized protein from Zymomonas mobilis subsp. mobilis (strain ATCC 31821 / ZM4 / CP4).